A 178-amino-acid chain; its full sequence is Large ribosomal subunit protein uL6 (178 aa).

Belongs to the universal ribosomal protein uL6 family. In terms of assembly, part of the 50S ribosomal subunit.

Its function is as follows. This protein binds to the 23S rRNA, and is important in its secondary structure. It is located near the subunit interface in the base of the L7/L12 stalk, and near the tRNA binding site of the peptidyltransferase center. The chain is Large ribosomal subunit protein uL6 from Paenarthrobacter aurescens (strain TC1).